Reading from the N-terminus, the 97-residue chain is Co-chaperonin GroES (97 aa).

Belongs to the GroES chaperonin family. As to quaternary structure, heptamer of 7 subunits arranged in a ring. Interacts with the chaperonin GroEL.

Its subcellular location is the cytoplasm. Together with the chaperonin GroEL, plays an essential role in assisting protein folding. The GroEL-GroES system forms a nano-cage that allows encapsulation of the non-native substrate proteins and provides a physical environment optimized to promote and accelerate protein folding. GroES binds to the apical surface of the GroEL ring, thereby capping the opening of the GroEL channel. The chain is Co-chaperonin GroES from Stenotrophomonas maltophilia (Pseudomonas maltophilia).